The primary structure comprises 413 residues: Serine/threonine transporter SstT (413 aa).

10 consecutive transmembrane segments (helical) span residues 18–38, 52–72, 86–106, 119–139, 145–165, 196–216, 221–241, 292–312, 320–340, and 360–380; these read LSLV…ALFA, FVSA…MASI, ILFL…IASM, IAVS…LSVV, ALMN…GVAI, LGIF…ALIG, LAVL…LIVF, VSIP…ITVL, LGIA…AICA, and LFGI…IIGV.

It belongs to the dicarboxylate/amino acid:cation symporter (DAACS) (TC 2.A.23) family.

The protein localises to the cell inner membrane. The enzyme catalyses L-serine(in) + Na(+)(in) = L-serine(out) + Na(+)(out). It carries out the reaction L-threonine(in) + Na(+)(in) = L-threonine(out) + Na(+)(out). Involved in the import of serine and threonine into the cell, with the concomitant import of sodium (symport system). The protein is Serine/threonine transporter SstT of Pseudomonas fluorescens (strain Pf0-1).